Consider the following 75-residue polypeptide: DNA-directed RNA polymerase subunit omega (75 aa).

The protein belongs to the RNA polymerase subunit omega family. In cyanobacteria the RNAP catalytic core is composed of 2 alpha, 1 beta, 1 beta', 1 gamma and 1 omega subunit. When a sigma factor is associated with the core the holoenzyme is formed, which can initiate transcription.

It catalyses the reaction RNA(n) + a ribonucleoside 5'-triphosphate = RNA(n+1) + diphosphate. In terms of biological role, promotes RNA polymerase assembly. Latches the N- and C-terminal regions of the beta' subunit thereby facilitating its interaction with the beta and alpha subunits. This Synechococcus sp. (strain CC9605) protein is DNA-directed RNA polymerase subunit omega.